Consider the following 382-residue polypeptide: Glutaminyl-peptide cyclotransferase-like protein (382 aa).

A helical transmembrane segment spans residues 35 to 55 (LLPLLLALAVGSAFYTIWSGW). Cys-167 and Cys-191 are oxidised to a cystine. Position 186 (Asp-186) interacts with Zn(2+). Catalysis depends on Glu-225, which acts as the Proton acceptor. Glu-226 lines the Zn(2+) pocket. The active-site Proton acceptor is the Asp-269. Zn(2+) is bound at residue His-351.

This sequence belongs to the glutaminyl-peptide cyclotransferase family.

The protein resides in the golgi apparatus membrane. The enzyme catalyses N-terminal L-glutaminyl-[peptide] = N-terminal 5-oxo-L-prolyl-[peptide] + NH4(+). In terms of biological role, responsible for the biosynthesis of pyroglutamyl peptides. This chain is Glutaminyl-peptide cyclotransferase-like protein (QPCTL), found in Macaca fascicularis (Crab-eating macaque).